The chain runs to 78 residues: MSEIASRVKAIIVDKLGVEESEVTTEASFTNDLGADSLDTVELIMEFEKEFGISIPDDQAEKIGTVGDAVSYIEANAK.

The Carrier domain occupies 2-77 (SEIASRVKAI…DAVSYIEANA (76 aa)). The residue at position 37 (S37) is an O-(pantetheine 4'-phosphoryl)serine.

This sequence belongs to the acyl carrier protein (ACP) family. In terms of processing, 4'-phosphopantetheine is transferred from CoA to a specific serine of apo-ACP by AcpS. This modification is essential for activity because fatty acids are bound in thioester linkage to the sulfhydryl of the prosthetic group.

The protein localises to the cytoplasm. It functions in the pathway lipid metabolism; fatty acid biosynthesis. Its function is as follows. Carrier of the growing fatty acid chain in fatty acid biosynthesis. This Phocaeicola vulgatus (strain ATCC 8482 / DSM 1447 / JCM 5826 / CCUG 4940 / NBRC 14291 / NCTC 11154) (Bacteroides vulgatus) protein is Acyl carrier protein.